The primary structure comprises 389 residues: Alpha-(1,3)-fucosyltransferase 7 (389 aa).

Residues 1 to 55 are Cytoplasmic-facing; the sequence is MPTPCPPACLSTPGTHRLLPFPDWKAPSWESRKEATCNSSSPGPWAEPTVQGYHP. A helical; Signal-anchor for type II membrane protein transmembrane segment spans residues 56–78; sequence TRRLRAWGGLAGGATFMVIWFFW. The Lumenal portion of the chain corresponds to 79-389; sequence LWGSAPGSAP…YEDLESWFQA (311 aa). Cysteine 115 and cysteine 123 are joined by a disulfide. Asparagine 128 is a glycosylation site (N-linked (GlcNAc...) asparagine). A disulfide bridge connects residues cysteine 258 and cysteine 261. Asparagine 338 is a glycosylation site (N-linked (GlcNAc...) asparagine). Cysteines 365 and 368 form a disulfide.

This sequence belongs to the glycosyltransferase 10 family. Post-translationally, N-glycosylated. Highly expressed in lung and bone marrow and to a much lesser extent in spleen, salivary gland and skeletal muscle.

The protein resides in the golgi apparatus. It localises to the golgi stack membrane. The enzyme catalyses an N-acetyl-alpha-neuraminyl-(2-&gt;3)-beta-D-galactosyl-(1-&gt;4)-N-acetyl-beta-D-glucosaminyl derivative + GDP-beta-L-fucose = an alpha-Neu5Ac-(2-&gt;3)-beta-D-Gal-(1-&gt;4)-[alpha-L-Fuc-(1-&gt;3)]-beta-D-GlcNAc derivative + GDP + H(+). It catalyses the reaction an alpha-Neu5Ac-(2-&gt;3)-beta-D-Gal-(1-&gt;4)-beta-D-GlcNAc6S derivative + GDP-beta-L-fucose = an alpha-Neu5Ac-(2-&gt;3)-beta-D-Gal-(1-&gt;4)-[alpha-L-Fuc-(1-&gt;3)]-beta-D-GlcNAc6S derivative + GDP + H(+). It carries out the reaction a neolactoside IV(3)-alpha-NeuAc-nLc4Cer + GDP-beta-L-fucose = a neolactoside IV(3)-alpha-NeuNAc,III(3)-alpha-Fuc-nLc4Cer + GDP + H(+). The catalysed reaction is a neolactoside VI(3)-alpha-NeuNAc-nLc6Cer + GDP-beta-L-fucose = a neolactoside VI(3)-alpha-NeuAc,V(3)-alphaFuc-nLc6Cer + GDP + H(+). The enzyme catalyses an alpha-Neu5Ac-(2-&gt;3)-beta-D-Gal-(1-&gt;4)-beta-D-GlcNAc-(1-&gt;3)-beta-D-Gal-(1-&gt;4)-[alpha-L-Fuc-(1-&gt;3)]-beta-D-GlcNAc derivative + GDP-beta-L-fucose = an alpha-Neu5Ac-(2-&gt;3)-beta-D-Gal-(1-&gt;4)-[alpha-L-Fuc-(1-&gt;3)]-beta-D-GlcNAc-(1-&gt;3)-beta-D-Gal-(1-&gt;4)-[alpha-L-Fuc-(1-&gt;3)]-beta-D-GlcNAc derivative + GDP + H(+). It catalyses the reaction alpha-Neu5Ac-(2-&gt;3)-beta-D-Gal-(1-&gt;4)-beta-D-GlcNAc-(1-&gt;3)-beta-D-Gal-(1-&gt;4)-D-Glc + GDP-beta-L-fucose = alpha-Neu5Ac-(2-&gt;3)-beta-D-Gal-(1-&gt;4)-[alpha-L-Fuc-(1-&gt;3)]-beta-D-GlcNAc-(1-&gt;3)-beta-D-Gal-(1-&gt;4)-D-Glc + GDP + H(+). It carries out the reaction alpha-Neu5Ac-(2-&gt;3)-beta-D-Gal-(1-&gt;4)-beta-D-GlcNAc-(1-&gt;3)-beta-D-Gal-(1-&gt;4)-[alpha-L-Fuc-(1-&gt;3)]-beta-D-GlcNAc-(1-&gt;3)-beta-D-Gal-(1-&gt;4)-beta-D-GlcNAc + GDP-beta-L-fucose = alpha-Neu5Ac-(2-&gt;3)-beta-D-Gal-(1-&gt;4)-[alpha-L-Fuc-(1-&gt;3)]-beta-D-GlcNAc-(1-&gt;3)-beta-D-Gal-(1-&gt;4)-[alpha-L-Fuc-(1-&gt;3)]-beta-D-GlcNAc-(1-&gt;3)-beta-D-Gal-(1-&gt;4)-beta-D-GlcNAc + GDP + H(+). The catalysed reaction is alpha-Neu5Ac-(2-&gt;3)-beta-D-Gal-(1-&gt;4)-beta-D-GlcNAc-(1-&gt;3)-beta-D-Gal-(1-&gt;4)-beta-D-GlcNAc-(1-&gt;3)-beta-D-Gal-(1-&gt;4)-beta-D-GlcNAc + GDP-beta-L-fucose = alpha-Neu5Ac-(2-&gt;3)-beta-D-Gal-(1-&gt;4)-[alpha-L-Fuc-(1-&gt;3)]-beta-D-GlcNAc-(1-&gt;3)-beta-D-Gal-(1-&gt;4)-beta-D-GlcNAc-(1-&gt;3)-beta-D-Gal-(1-&gt;4)-beta-D-GlcNAc + GDP + H(+). It functions in the pathway protein modification; protein glycosylation. Inhibited by NaCl. Inhibited by GDP in a concentration dependent manner, with an IC(50) value of 93 uM. Also inhibited by GMP and GTP. Inhibited by N-ethylmaleimide. Activated by poly(ethylene glycol) by enhancing the thermal stability of FUT7. Activated by Mn2+, Ca2+, and Mg2+. Both panosialin A and B inhibit activity with IC(50) values of 4.8 and 5.3 ug/ml, respectively. Inhibited by gallic acid (GA) and (-)-epigallocatechin gallate (EGCG) in a time-dependent and irreversible manner with IC(50) values of 60 and 700 nM, respectively. Functionally, catalyzes the transfer of L-fucose, from a guanosine diphosphate-beta-L-fucose, to the N-acetyl glucosamine (GlcNAc) of a distal alpha2,3 sialylated lactosamine unit of a glycoprotein or a glycolipid-linked sialopolylactosamines chain through an alpha-1,3 glycosidic linkage and participates in the final fucosylation step in the biosynthesis of the sialyl Lewis X (sLe(x)), a carbohydrate involved in cell and matrix adhesion during leukocyte trafficking and fertilization. In vitro, also synthesizes sialyl-dimeric-Lex structures, from VIM-2 structures and both di-fucosylated and trifucosylated structures from mono-fucosylated precursors. However does not catalyze alpha 1-3 fucosylation when an internal alpha 1-3 fucosylation is present in polylactosamine chain and the fucosylation rate of the internal GlcNAc residues is reduced once fucose has been added to the distal GlcNAc. Also catalyzes the transfer of a fucose from GDP-beta-fucose to the 6-sulfated a(2,3)sialylated substrate to produce 6-sulfo sLex mediating significant L-selectin-dependent cell adhesion. Through sialyl-Lewis(x) biosynthesis, can control SELE- and SELP-mediated cell adhesion with leukocytes and allows leukocytes tethering and rolling along the endothelial tissue thereby enabling the leukocytes to accumulate at a site of inflammation. May enhance embryo implantation through sialyl Lewis X (sLeX)-mediated adhesion of embryo cells to endometrium. May affect insulin signaling by up-regulating the phosphorylation and expression of some signaling molecules involved in the insulin-signaling pathway through SLe(x) which is present on the glycans of the INSRR alpha subunit. The polypeptide is Alpha-(1,3)-fucosyltransferase 7 (Mus musculus (Mouse)).